The following is a 65-amino-acid chain: uncharacterized protein (65 aa).

This is an uncharacterized protein from Thermoproteus tenax (TTV1).